We begin with the raw amino-acid sequence, 594 residues long: UvrABC system protein C (594 aa).

The region spanning 14–91 (DKPGCYLMKD…IKKHDPKYNV (78 aa)) is the GIY-YIG domain. The 36-residue stretch at 196-231 (SDIKEQLRERMEKAAEDLDFERAKELRDTIAQMEKV) folds into the UVR domain.

Belongs to the UvrC family. As to quaternary structure, interacts with UvrB in an incision complex.

The protein resides in the cytoplasm. In terms of biological role, the UvrABC repair system catalyzes the recognition and processing of DNA lesions. UvrC both incises the 5' and 3' sides of the lesion. The N-terminal half is responsible for the 3' incision and the C-terminal half is responsible for the 5' incision. The polypeptide is UvrABC system protein C (Shouchella clausii (strain KSM-K16) (Alkalihalobacillus clausii)).